The following is a 609-amino-acid chain: Glutamine--fructose-6-phosphate aminotransferase [isomerizing] (609 aa).

Cys-2 (nucleophile; for GATase activity) is an active-site residue. One can recognise a Glutamine amidotransferase type-2 domain in the interval 2–218 (CGIVGAIAQR…EGDIAEITRR (217 aa)). SIS domains are found at residues 286–426 (ADEL…LKGL) and 458–599 (LAED…VDQP). Lys-604 (for Fru-6P isomerization activity) is an active-site residue.

In terms of assembly, homodimer.

The protein resides in the cytoplasm. The catalysed reaction is D-fructose 6-phosphate + L-glutamine = D-glucosamine 6-phosphate + L-glutamate. In terms of biological role, catalyzes the first step in hexosamine metabolism, converting fructose-6P into glucosamine-6P using glutamine as a nitrogen source. The polypeptide is Glutamine--fructose-6-phosphate aminotransferase [isomerizing] (Shigella flexneri).